The chain runs to 380 residues: Cytochrome b (380 aa).

4 consecutive transmembrane segments (helical) span residues 34–54, 78–99, 114–134, and 179–199; these read FGSLLALCLMTQILTGLLLAM, WLIRNMHANGASFFFICIYMHI, WNTGILLLLTLMATAFVGYVL, and FFALHFLLPFMIAGLTLIHLT. Residues His-84 and His-98 each coordinate heme b. 2 residues coordinate heme b: His-183 and His-197. His-202 contributes to the a ubiquinone binding site. The next 4 membrane-spanning stretches (helical) occupy residues 227–247, 289–309, 321–341, and 348–368; these read LKDILGLTLLLLPLTTMALFS, LGGVLALAASVLVLFLSPLLH, LSQLLFWTLVANLLILTWIGS, and FIIIGQLASTTYFIILLILFP.

It belongs to the cytochrome b family. In terms of assembly, the cytochrome bc1 complex contains 11 subunits: 3 respiratory subunits (MT-CYB, CYC1 and UQCRFS1), 2 core proteins (UQCRC1 and UQCRC2) and 6 low-molecular weight proteins (UQCRH/QCR6, UQCRB/QCR7, UQCRQ/QCR8, UQCR10/QCR9, UQCR11/QCR10 and a cleavage product of UQCRFS1). This cytochrome bc1 complex then forms a dimer. Heme b serves as cofactor.

The protein localises to the mitochondrion inner membrane. Functionally, component of the ubiquinol-cytochrome c reductase complex (complex III or cytochrome b-c1 complex) that is part of the mitochondrial respiratory chain. The b-c1 complex mediates electron transfer from ubiquinol to cytochrome c. Contributes to the generation of a proton gradient across the mitochondrial membrane that is then used for ATP synthesis. This Hydrobates pelagicus (European storm-petrel) protein is Cytochrome b (MT-CYB).